A 230-amino-acid polypeptide reads, in one-letter code: Calcyclin-binding protein (230 aa).

The segment at Met-1 to Trp-82 is interaction with SIAH1. A Phosphoserine modification is found at Ser-3. 2 positions are modified to N6-acetyllysine: Lys-10 and Lys-21. At Ser-36 the chain carries Phosphoserine. The interval Ile-38–Asn-59 is disordered. The CS domain occupies Val-75 to Thr-169. Residues Val-75 to Phe-230 form an interaction with SKP1 region. An N6-acetyllysine mark is found at Lys-87 and Lys-120. The interval Cys-156–Phe-230 is interaction with S100A6. One can recognise an SGS domain in the interval Gln-170–Phe-230.

In terms of assembly, monomer or homodimer. Component of some large E3 complex at least composed of UBE2D1, SIAH1, CACYBP/SIP, SKP1, APC and TBL1X. Interacts directly with SIAH1, SIAH2 and SKP1. Interacts with proteins of the S100 family S100A1, S100A6, S100B, S100P and S100A12 in a calcium-dependent manner. Phosphorylated on serine residues. Phosphorylated upon induction by RA or at high calcium concentrations.

The protein resides in the nucleus. It is found in the cytoplasm. Its function is as follows. May be involved in calcium-dependent ubiquitination and subsequent proteasomal degradation of target proteins. Probably serves as a molecular bridge in ubiquitin E3 complexes. Participates in the ubiquitin-mediated degradation of beta-catenin (CTNNB1). The polypeptide is Calcyclin-binding protein (CACYBP) (Bos taurus (Bovine)).